A 498-amino-acid chain; its full sequence is Glycerol kinase (498 aa).

Thr12 serves as a coordination point for ADP. ATP-binding residues include Thr12, Thr13, and Ser14. Position 12 (Thr12) interacts with sn-glycerol 3-phosphate. ADP is bound at residue Arg16. Residues Arg82, Glu83, Tyr134, and Asp241 each coordinate sn-glycerol 3-phosphate. 5 residues coordinate glycerol: Arg82, Glu83, Tyr134, Asp241, and Gln242. Residues Thr263 and Gly310 each coordinate ADP. Residues Thr263, Gly310, Gln314, and Gly411 each contribute to the ATP site. 2 residues coordinate ADP: Gly411 and Asn415.

Belongs to the FGGY kinase family.

It carries out the reaction glycerol + ATP = sn-glycerol 3-phosphate + ADP + H(+). It participates in polyol metabolism; glycerol degradation via glycerol kinase pathway; sn-glycerol 3-phosphate from glycerol: step 1/1. Inhibited by fructose 1,6-bisphosphate (FBP). Functionally, key enzyme in the regulation of glycerol uptake and metabolism. Catalyzes the phosphorylation of glycerol to yield sn-glycerol 3-phosphate. The sequence is that of Glycerol kinase from Herminiimonas arsenicoxydans.